The sequence spans 1411 residues: DNA-directed RNA polymerase subunit beta' (1411 aa).

Residues Cys-70, Cys-72, Cys-85, and Cys-88 each coordinate Zn(2+). Residues Asp-458, Asp-460, and Asp-462 each coordinate Mg(2+). Zn(2+) contacts are provided by Cys-813, Cys-887, Cys-894, and Cys-897. The segment at 1391 to 1411 is disordered; sequence AQAEVPELDGSSVTASDAAAD.

Belongs to the RNA polymerase beta' chain family. As to quaternary structure, the RNAP catalytic core consists of 2 alpha, 1 beta, 1 beta' and 1 omega subunit. When a sigma factor is associated with the core the holoenzyme is formed, which can initiate transcription. Requires Mg(2+) as cofactor. The cofactor is Zn(2+).

The enzyme catalyses RNA(n) + a ribonucleoside 5'-triphosphate = RNA(n+1) + diphosphate. Its function is as follows. DNA-dependent RNA polymerase catalyzes the transcription of DNA into RNA using the four ribonucleoside triphosphates as substrates. This Verminephrobacter eiseniae (strain EF01-2) protein is DNA-directed RNA polymerase subunit beta'.